We begin with the raw amino-acid sequence, 302 residues long: Beta-lactamase (302 aa).

Positions 1 to 11 (MADRRRVHAWA) are enriched in basic residues. Residues 1–29 (MADRRRVHAWARARPAAPEPAPPTPSAAA) form the signal peptide. Residues 1-43 (MADRRRVHAWARARPAAPEPAPPTPSAAAPSVAPGPAATPPDP) form a disordered region. Over residues 26 to 36 (SAAAPSVAPGP) the composition is skewed to low complexity. S85 acts as the Acyl-ester intermediate in catalysis. S143 contributes to the substrate binding site. The active-site Proton acceptor is E179. Residue 247-249 (KTG) coordinates substrate.

It belongs to the class-A beta-lactamase family.

It localises to the secreted. It catalyses the reaction a beta-lactam + H2O = a substituted beta-amino acid. Active on penicillins but not on cephalosporins. The protein is Beta-lactamase (bla) of Amycolatopsis lactamdurans (Nocardia lactamdurans).